Here is a 314-residue protein sequence, read N- to C-terminus: Probable cell division protein WhiA (314 aa).

The segment at residues 275–309 is a DNA-binding region (H-T-H motif); the sequence is SLKELGELVTSGAISKSGVNHRLKKIDEFAEKIKR.

It belongs to the WhiA family.

Involved in cell division and chromosome segregation. This chain is Probable cell division protein WhiA, found in Oceanobacillus iheyensis (strain DSM 14371 / CIP 107618 / JCM 11309 / KCTC 3954 / HTE831).